Here is a 143-residue protein sequence, read N- to C-terminus: Small ribosomal subunit protein uS11c (143 aa).

This sequence belongs to the universal ribosomal protein uS11 family. Part of the 30S ribosomal subunit.

The protein localises to the plastid. It is found in the chloroplast. The protein is Small ribosomal subunit protein uS11c of Cenchrus americanus (Pearl millet).